The sequence spans 524 residues: D-3-phosphoglycerate dehydrogenase (524 aa).

NAD(+) is bound by residues 149–150 (RI), D169, 229–231 (CAR), and D255. Residue R231 is part of the active site. E260 is a catalytic residue. H278 acts as the Proton donor in catalysis. Residue 278–281 (HQGA) participates in NAD(+) binding. The region spanning 452-524 (LAIIKHIDRP…NIKDVAVINL (73 aa)) is the ACT domain.

Belongs to the D-isomer specific 2-hydroxyacid dehydrogenase family.

It catalyses the reaction (2R)-3-phosphoglycerate + NAD(+) = 3-phosphooxypyruvate + NADH + H(+). It functions in the pathway amino-acid biosynthesis; L-serine biosynthesis; L-serine from 3-phospho-D-glycerate: step 1/3. The sequence is that of D-3-phosphoglycerate dehydrogenase (serA) from Methanocaldococcus jannaschii (strain ATCC 43067 / DSM 2661 / JAL-1 / JCM 10045 / NBRC 100440) (Methanococcus jannaschii).